Consider the following 763-residue polypeptide: MSELLSVALFLASVLIYAWKAGRNTWWFAATLTVLGLFVILNITLYASDYFTGDGINDAVLYTLTNSLTGAGVGKYILPGIGIALALVAVFGALGWVLRRRRHHPHHVGYSLLALLLALGSVDASPAFRQITELVKSQMRDGDPDFAVYYKEPAKTIPNPKLNLVYIYGESLERTYFDNDAFPNLTPELGALKNEGLDFSHTMQLPGTDYTIAGMVASQCGIPLFAPFEGNASASVSSFFPQNICLGDILKNSGYQNYFVQGANLRFAGKDVFLKSHGFDNLYGAEELKTVVADPSYRNDWGFYDDTVLDEAWKKFEALSRSGQRFSLFTLTVDTHHPDGFISRTCNRKRYDYDGKPNQSFSAVSCSQENIAEFINKIKASPWFKDTVIVVSSDHLAMNNTAWKYLNKQDRNNLFFILRGDKPQQETLAVKRNTMDNGATVLDILGGDNFIGLGRNSLSGQSLSEVFLNVKEKVLAMKPDIIRLWNFPKEIKDFTVDRDKNMIAFSGSHFRLPLLLRVSDKRVEPLPESEYSAPLRFQLADFAPRDNFVWIDRCYKMAQLWAPALALSTDWCVSQGQLGGQQTVQHVDKAQWQGKTAFKDTMIDMERYKGNVDTLKIVDNDIRYKADSFIFNVAGAPEEVKQFSGISRPESWGRWSNAQLGDEVKIEYKAPLPKKFDLVITAKAFGDNAERPIPVRVGNEEQTLVLGHDVSTITLHFNNPTDANTLVIAPPAPVSTNEGNILGHSPRKLGIGMVEIKVVNVEG.

Helical transmembrane passes span 1-21 (MSEL…AWKA), 26-46 (WWFA…ITLY), 77-97 (ILPG…LGWV), and 108-128 (VGYS…SPAF).

Belongs to the OpgB family.

It is found in the cell inner membrane. The enzyme catalyses a phosphatidylglycerol + a membrane-derived-oligosaccharide D-glucose = a 1,2-diacyl-sn-glycerol + a membrane-derived-oligosaccharide 6-(glycerophospho)-D-glucose.. The protein operates within glycan metabolism; osmoregulated periplasmic glucan (OPG) biosynthesis. In terms of biological role, transfers a phosphoglycerol residue from phosphatidylglycerol to the membrane-bound nascent glucan backbones. The sequence is that of Phosphoglycerol transferase I from Salmonella choleraesuis (strain SC-B67).